The chain runs to 971 residues: Nuclear factor NF-kappa-B p105 subunit (971 aa).

An RHD domain is found at 40 to 365; it reads PYLQILEQPK…EVQRKRQKLM (326 aa). An S-nitrosocysteine; alternate modification is found at C59. The S-(15-deoxy-Delta12,14-prostaglandin J2-9-yl)cysteine; alternate moiety is linked to residue C59. K323 participates in a covalent cross-link: Glycyl lysine isopeptide (Lys-Gly) (interchain with G-Cter in SUMO2). The residue at position 335 (S335) is a Phosphoserine; by PKA. The short motif at 358–363 is the Nuclear localization signal element; it reads QRKRQK. The GRR stretch occupies residues 370–392; that stretch reads DSFGGGSGAGAGGGGMFGSGGGG. The interval 433–971 is interaction with CFLAR; the sequence is INTKFKNGPK…GQEGPIEGKI (539 aa). Position 438 is an N6-acetyllysine; by EP300 (K438). Residues 439–470 form a disordered region; it reads NGPKDCAKSDDEESLTLPEKETEGEGPSLPMA. A Phosphoserine modification is found at S447. ANK repeat units lie at residues 538 to 567, 577 to 606, 610 to 639, 646 to 675, 680 to 710, and 714 to 743; these read NGDSVLHLAIIHLHAQLVRDLLEVTSGLIS, LYQTPLHLAVITKQEDVVEDLLRVGADLSL, WGNSVLHLAAKEGHDRILSILLKSRKAAPL, EGLNAIHIAVMSNSLPCLLLLVAAGAEVNA, SGRTALHLAVEYDNISLAGCLLLEGDAHVDS, and DGTTPLHIAAGRGSTRLAALLKAAGADPLV. Positions 646–680 are essential for interaction with HIF1AN; it reads EGLNAIHIAVMSNSLPCLLLLVAAGAEVNAQEQKS. Residue N674 is modified to (3S)-3-hydroxyasparagine; by HIF1AN. S755 carries the post-translational modification Phosphoserine. One copy of the ANK 7 repeat lies at 767–797; sequence PGTTPLDMAANWQVFDILNGKPYEPVFTSDD. In terms of domain architecture, Death spans 801-888; the sequence is QGDMKQLTED…EAIEVIQAAF (88 aa). Position 896 is a phosphoserine (S896). S910 is modified (phosphoserine; by GSK3-beta; in vitro). Phosphoserine is present on S926. Phosphoserine; by IKKB occurs at positions 930 and 935. S940 bears the Phosphoserine mark. Phosphothreonine is present on T946.

As to quaternary structure, component of the NF-kappa-B p65-p50 complex. Homodimer; component of the NF-kappa-B p50-p50 complex. Component of the NF-kappa-B p105-p50 complex. Component of the NF-kappa-B p50-c-Rel complex. Component of a complex consisting of the NF-kappa-B p50-p50 homodimer and BCL3. Also interacts with MAP3K8. NF-kappa-B p50 subunit interacts with NCOA3 coactivator, which may coactivate NF-kappa-B dependent expression via its histone acetyltransferase activity. Interacts with TSC22D3; this interaction prevents nuclear translocation and DNA-binding. Interacts with SPAG9 and UNC5CL. NFKB1/p105 interacts with CFLAR; the interaction inhibits p105 processing into p50. NFKB1/p105 forms a ternary complex with MAP3K8 and TNIP2. Interacts with GSK3B; the interaction prevents processing of p105 to p50. NFKB1/p50 interacts with NFKBIE. NFKB1/p50 interacts with NFKBIZ. Nuclear factor NF-kappa-B p50 subunit interacts with NFKBID. Directly interacts with MEN1. Interacts with HIF1AN. Interacts with FEM1AA; interaction is direct. In terms of processing, generation of the NF-kappa-B p50 (Nuclear factor NF-kappa-B p50 subunit) transcription factor takes place both cotranslationally and post-translationally via non-mutually exclusive mechanisms. A cotranslational processing allows the production of both p50 and p105 (Nuclear factor NF-kappa-B p105 subunit) from a single NFKB1 mRNA. While translation occurs, the particular unfolded structure after the GRR repeat region acts as a substrate for the proteasome, promoting degradation of the C-terminus. The GRR acts as a proteasomal 'stop signal', protecting the region upstream of the GRR from degradation and promoting generation of p50. It is unclear if limited proteasome degradation during cotranslational processing depends on ubiquitination. NF-kappa-B p50 is also generated post-translationally following ubiquitination by the KPC complex, leading to limited processing by the proteasome downstream of the GRR region, thereby generating p50. Post-translationally, phosphorylation at the C-terminus by IKBKB/IKKB acts as a signal for ubiquitination and promotes either complete degradation or processing to generate the NF-kappa-B p50 (Nuclear factor NF-kappa-B p50 subunit). Phosphorylation at Ser-910 primes p105 for proteolytic processing in response to TNF-alpha stimulation. Phosphorylation at Ser-926, Ser-930 and Ser-935 are required for BTRC/BTRCP-mediated ubiquitination and proteolysis. Phosphorylation at Ser-930 is also required for ubiquitination by the KPC complex and limited processing to generate NF-kappa-B p50 (Nuclear factor NF-kappa-B p50 subunit). Polyubiquitinated at multiple Lys residues in the C-terminus. Polyubiquitinated by the SCF(FBXW11) and SCF(BTRC) complexes following phosphorylation at Ser-926, Ser-930 and Ser-935, leading to its complete degradation. In contrast, polyubiquitination by the KPC complex following phosphorylation at Ser-930 leads to limited proteosomal processing and generation of the active NF-kappa-B p50 (Nuclear factor NF-kappa-B p50 subunit). In terms of processing, S-nitrosylation of Cys-59 affects DNA binding. Post-translationally, the covalent modification of cysteine by 15-deoxy-Delta12,14-prostaglandin-J2 is autocatalytic and reversible. It may occur as an alternative to other cysteine modifications, such as S-nitrosylation and S-palmitoylation.

It localises to the cytoplasm. The protein resides in the nucleus. In terms of biological role, NF-kappa-B is a pleiotropic transcription factor present in almost all cell types and is the endpoint of a series of signal transduction events that are initiated by a vast array of stimuli related to many biological processes such as inflammation, immunity, differentiation, cell growth, tumorigenesis and apoptosis. NF-kappa-B is a homo- or heterodimeric complex formed by the Rel-like domain-containing proteins RELA/p65, RELB, NFKB1/p105, NFKB1/p50, REL and NFKB2/p52 and the heterodimeric p65-p50 complex appears to be most abundant one. The dimers bind at kappa-B sites in the DNA of their target genes and the individual dimers have distinct preferences for different kappa-B sites that they can bind with distinguishable affinity and specificity. Different dimer combinations act as transcriptional activators or repressors, respectively. NF-kappa-B is controlled by various mechanisms of post-translational modification and subcellular compartmentalization as well as by interactions with other cofactors or corepressors. NF-kappa-B complexes are held in the cytoplasm in an inactive state complexed with members of the NF-kappa-B inhibitor (I-kappa-B) family. In a conventional activation pathway, I-kappa-B is phosphorylated by I-kappa-B kinases (IKKs) in response to different activators, subsequently degraded thus liberating the active NF-kappa-B complex which translocates to the nucleus. NF-kappa-B heterodimeric p65-p50 and RelB-p50 complexes are transcriptional activators. The NF-kappa-B p50-p50 homodimer is a transcriptional repressor, but can act as a transcriptional activator when associated with BCL3. NFKB1 appears to have dual functions such as cytoplasmic retention of attached NF-kappa-B proteins by p105 and generation of p50 by a cotranslational processing. The proteasome-mediated process ensures the production of both p50 and p105 and preserves their independent function, although processing of NFKB1/p105 also appears to occur post-translationally. p50 binds to the kappa-B consensus sequence 5'-GGRNNYYCC-3', located in the enhancer region of genes involved in immune response and acute phase reactions. Plays a role in the regulation of apoptosis. In a complex with MAP3K8, NFKB1/p105 represses MAP3K8-induced MAPK signaling; active MAP3K8 is released by proteasome-dependent degradation of NFKB1/p105. Functionally, P105 is the precursor of the active p50 subunit (Nuclear factor NF-kappa-B p50 subunit) of the nuclear factor NF-kappa-B. Acts as a cytoplasmic retention of attached NF-kappa-B proteins by p105. Its function is as follows. Constitutes the active form, which associates with RELA/p65 to form the NF-kappa-B p65-p50 complex to form a transcription factor. Together with RELA/p65, binds to the kappa-B consensus sequence 5'-GGRNNYYCC-3', located in the enhancer region of genes involved in immune response and acute phase reactions. Isoform 3 (p98) (but not p84 or p105) acts as a transactivator of NF-kappa-B-regulated gene expression. In terms of biological role, acts as an inhibitor of transactivation of p50 NF-kappa-B subunit, probably by sequestering it in the cytoplasm. In Mus musculus (Mouse), this protein is Nuclear factor NF-kappa-B p105 subunit (Nfkb1).